Reading from the N-terminus, the 525-residue chain is Light-independent protochlorophyllide reductase subunit B (525 aa).

Residue aspartate 36 coordinates [4Fe-4S] cluster. The active-site Proton donor is the aspartate 286. 421 to 422 (GL) is a binding site for substrate.

Belongs to the ChlB/BchB/BchZ family. As to quaternary structure, protochlorophyllide reductase is composed of three subunits; ChlL, ChlN and ChlB. Forms a heterotetramer of two ChlB and two ChlN subunits. Requires [4Fe-4S] cluster as cofactor.

The catalysed reaction is chlorophyllide a + oxidized 2[4Fe-4S]-[ferredoxin] + 2 ADP + 2 phosphate = protochlorophyllide a + reduced 2[4Fe-4S]-[ferredoxin] + 2 ATP + 2 H2O. Its pathway is porphyrin-containing compound metabolism; chlorophyll biosynthesis (light-independent). Component of the dark-operative protochlorophyllide reductase (DPOR) that uses Mg-ATP and reduced ferredoxin to reduce ring D of protochlorophyllide (Pchlide) to form chlorophyllide a (Chlide). This reaction is light-independent. The NB-protein (ChlN-ChlB) is the catalytic component of the complex. This chain is Light-independent protochlorophyllide reductase subunit B, found in Prochlorococcus marinus (strain NATL1A).